Consider the following 294-residue polypeptide: Protease HtpX (294 aa).

2 consecutive transmembrane segments (helical) span residues 4–24 and 34–52; these read IALF…VLSL and GLLI…VSLM. His-139 contacts Zn(2+). The active site involves Glu-140. A Zn(2+)-binding site is contributed by His-143. 2 consecutive transmembrane segments (helical) span residues 158-178 and 194-214; these read VVNT…AGFL and LIYF…ASII. Zn(2+) is bound at residue Glu-223.

It belongs to the peptidase M48B family. It depends on Zn(2+) as a cofactor.

It localises to the cell inner membrane. The sequence is that of Protease HtpX from Klebsiella pneumoniae subsp. pneumoniae (strain ATCC 700721 / MGH 78578).